Reading from the N-terminus, the 339-residue chain is Phenylalanine--tRNA ligase alpha subunit (339 aa).

Residue glutamate 254 coordinates Mg(2+).

Belongs to the class-II aminoacyl-tRNA synthetase family. Phe-tRNA synthetase alpha subunit type 1 subfamily. In terms of assembly, tetramer of two alpha and two beta subunits. Mg(2+) is required as a cofactor.

It is found in the cytoplasm. It catalyses the reaction tRNA(Phe) + L-phenylalanine + ATP = L-phenylalanyl-tRNA(Phe) + AMP + diphosphate + H(+). In Clostridium perfringens (strain ATCC 13124 / DSM 756 / JCM 1290 / NCIMB 6125 / NCTC 8237 / Type A), this protein is Phenylalanine--tRNA ligase alpha subunit.